The primary structure comprises 372 residues: Glutamate 5-kinase (372 aa).

Lys-14 contacts ATP. Residues Ser-54, Asp-141, and Asn-153 each coordinate substrate. Residue 173-174 coordinates ATP; sequence TD. In terms of domain architecture, PUA spans 280–358; that stretch reads RGNVTLDEGA…DEIESLLGYI (79 aa).

The protein belongs to the glutamate 5-kinase family.

Its subcellular location is the cytoplasm. The enzyme catalyses L-glutamate + ATP = L-glutamyl 5-phosphate + ADP. It functions in the pathway amino-acid biosynthesis; L-proline biosynthesis; L-glutamate 5-semialdehyde from L-glutamate: step 1/2. Catalyzes the transfer of a phosphate group to glutamate to form L-glutamate 5-phosphate. In Nitrosospira multiformis (strain ATCC 25196 / NCIMB 11849 / C 71), this protein is Glutamate 5-kinase.